The primary structure comprises 345 residues: Ninja-family protein AFP1 (345 aa).

Disordered stretches follow at residues 114 to 185 and 201 to 256; these read TSLP…ATAN and QVSG…RRLS. Composition is skewed to basic and acidic residues over residues 123–132 and 222–232; these read EWRKRKEMQT and LETKASSDEAR. Low complexity predominate over residues 235–249; sequence PSTTQPQQETTTKPT.

It belongs to the Ninja family. Forms a heterodimer with AFP2. Interacts with ABI5/DPBF1, DPBF2, AREB3/DPBF3, ABF1, ABF3/DPBF5 and ABF4/AREB2.

The protein resides in the nucleus. Acts as a negative regulator of abscisic acid (ABA) response during germination through the ubiquitin-mediated proteolysis of ABI5/DPBF1. This is Ninja-family protein AFP1 (AFP1) from Arabidopsis thaliana (Mouse-ear cress).